Reading from the N-terminus, the 351-residue chain is Ion-translocating oxidoreductase complex subunit D (351 aa).

Transmembrane regions (helical) follow at residues isoleucine 18–glycine 38, leucine 42–leucine 62, leucine 87–alanine 107, and proline 121–leucine 141. The residue at position 185 (threonine 185) is an FMN phosphoryl threonine. Transmembrane regions (helical) follow at residues leucine 212–leucine 232, isoleucine 241–proline 261, phenylalanine 264–alanine 284, leucine 298–proline 318, and glycine 320–glutamine 340.

The protein belongs to the NqrB/RnfD family. The complex is composed of six subunits: RnfA, RnfB, RnfC, RnfD, RnfE and RnfG. FMN is required as a cofactor.

Its subcellular location is the cell inner membrane. Its function is as follows. Part of a membrane-bound complex that couples electron transfer with translocation of ions across the membrane. The sequence is that of Ion-translocating oxidoreductase complex subunit D from Yersinia enterocolitica serotype O:8 / biotype 1B (strain NCTC 13174 / 8081).